A 430-amino-acid chain; its full sequence is Probable carboxypeptidase AO090003000058 (430 aa).

Residues 1 to 16 (MKSIYSLVLCTALTAA) form the signal peptide. N-linked (GlcNAc...) asparagine glycosylation is present at Asn84. Asp156 provides a ligand contact to Zn(2+). Glu188 acts as the Proton acceptor in catalysis. Glu189 serves as a coordination point for Zn(2+). N-linked (GlcNAc...) asparagine glycosylation is present at Asn285.

Belongs to the peptidase M20A family. Zn(2+) serves as cofactor.

Its subcellular location is the secreted. This Aspergillus oryzae (strain ATCC 42149 / RIB 40) (Yellow koji mold) protein is Probable carboxypeptidase AO090003000058.